The following is a 280-amino-acid chain: Phosphatidylglycerol--prolipoprotein diacylglyceryl transferase (280 aa).

A run of 3 helical transmembrane segments spans residues 21–41, 54–74, and 88–108; these read WYGIIMAVAIVLATWMAISEG, LLLWAVPLGYVGARIYYVIFE, and IWNGGIAIYGGLIAGLIVLLI. Arg136 provides a ligand contact to a 1,2-diacyl-sn-glycero-3-phospho-(1'-sn-glycerol). Helical transmembrane passes span 176 to 196, 206 to 226, and 236 to 256; these read QPTFLYESFFNLIGLIIILSL, GEVFMSYLLWYSVVRFFVEGM, and IIRVSQALSLVLFIATIILWI.

Belongs to the Lgt family.

It localises to the cell membrane. The catalysed reaction is L-cysteinyl-[prolipoprotein] + a 1,2-diacyl-sn-glycero-3-phospho-(1'-sn-glycerol) = an S-1,2-diacyl-sn-glyceryl-L-cysteinyl-[prolipoprotein] + sn-glycerol 1-phosphate + H(+). Its pathway is protein modification; lipoprotein biosynthesis (diacylglyceryl transfer). Catalyzes the transfer of the diacylglyceryl group from phosphatidylglycerol to the sulfhydryl group of the N-terminal cysteine of a prolipoprotein, the first step in the formation of mature lipoproteins. This Lactobacillus acidophilus (strain ATCC 700396 / NCK56 / N2 / NCFM) protein is Phosphatidylglycerol--prolipoprotein diacylglyceryl transferase.